The following is a 393-amino-acid chain: Rhizopuspepsin (393 aa).

A signal peptide spans 1–21; that stretch reads MKFTLISSCIAIAALAVAVDA. A propeptide spans 22–68 (activation peptide); that stretch reads APGEKKISIPLAKNPNYKPSAKNAIQKAIAKYNKHKINTSTGGIVPD. The 305-residue stretch at 85 to 389 folds into the Peptidase A1 domain; it reads YYGQVTIGTP…NQGVPEVQIA (305 aa). D103 is an active-site residue. Residues C116 and C119 are joined by a disulfide bond. D286 is an active-site residue. C320 and C353 are disulfide-bonded.

This sequence belongs to the peptidase A1 family.

It carries out the reaction Hydrolysis of proteins with broad specificity similar to that of pepsin A, preferring hydrophobic residues at P1 and P1'. Clots milk and activates trypsinogen. Does not cleave 4-Gln-|-His-5, but does cleave 10-His-|-Leu-11 and 12-Val-|-Glu-13 in B chain of insulin.. This chain is Rhizopuspepsin, found in Rhizopus chinensis (Bread mold).